A 180-amino-acid polypeptide reads, in one-letter code: Large ribosomal subunit protein uL5 (180 aa).

This sequence belongs to the universal ribosomal protein uL5 family. In terms of assembly, part of the 50S ribosomal subunit; part of the 5S rRNA/L5/L18/L25 subcomplex. Contacts the 5S rRNA and the P site tRNA. Forms a bridge to the 30S subunit in the 70S ribosome.

In terms of biological role, this is one of the proteins that bind and probably mediate the attachment of the 5S RNA into the large ribosomal subunit, where it forms part of the central protuberance. In the 70S ribosome it contacts protein S13 of the 30S subunit (bridge B1b), connecting the 2 subunits; this bridge is implicated in subunit movement. Contacts the P site tRNA; the 5S rRNA and some of its associated proteins might help stabilize positioning of ribosome-bound tRNAs. The sequence is that of Large ribosomal subunit protein uL5 from Polynucleobacter asymbioticus (strain DSM 18221 / CIP 109841 / QLW-P1DMWA-1) (Polynucleobacter necessarius subsp. asymbioticus).